The chain runs to 270 residues: Formamidopyrimidine-DNA glycosylase (270 aa).

The Schiff-base intermediate with DNA role is filled by proline 2. Glutamate 3 acts as the Proton donor in catalysis. Lysine 58 functions as the Proton donor; for beta-elimination activity in the catalytic mechanism. DNA contacts are provided by histidine 91, arginine 110, and arginine 151. An FPG-type zinc finger spans residues 236-270 (FAYGRAGEFCKVCGTTLREVKLGQRASVYCPRCQR). Arginine 260 (proton donor; for delta-elimination activity) is an active-site residue.

It belongs to the FPG family. As to quaternary structure, monomer. It depends on Zn(2+) as a cofactor.

The enzyme catalyses Hydrolysis of DNA containing ring-opened 7-methylguanine residues, releasing 2,6-diamino-4-hydroxy-5-(N-methyl)formamidopyrimidine.. The catalysed reaction is 2'-deoxyribonucleotide-(2'-deoxyribose 5'-phosphate)-2'-deoxyribonucleotide-DNA = a 3'-end 2'-deoxyribonucleotide-(2,3-dehydro-2,3-deoxyribose 5'-phosphate)-DNA + a 5'-end 5'-phospho-2'-deoxyribonucleoside-DNA + H(+). Involved in base excision repair of DNA damaged by oxidation or by mutagenic agents. Acts as a DNA glycosylase that recognizes and removes damaged bases. Has a preference for oxidized purines, such as 7,8-dihydro-8-oxoguanine (8-oxoG). Has AP (apurinic/apyrimidinic) lyase activity and introduces nicks in the DNA strand. Cleaves the DNA backbone by beta-delta elimination to generate a single-strand break at the site of the removed base with both 3'- and 5'-phosphates. This Ectopseudomonas mendocina (strain ymp) (Pseudomonas mendocina) protein is Formamidopyrimidine-DNA glycosylase.